Reading from the N-terminus, the 58-residue chain is UPF0509 protein YciZ (58 aa).

Belongs to the UPF0509 family.

In Escherichia fergusonii (strain ATCC 35469 / DSM 13698 / CCUG 18766 / IAM 14443 / JCM 21226 / LMG 7866 / NBRC 102419 / NCTC 12128 / CDC 0568-73), this protein is UPF0509 protein YciZ.